Consider the following 82-residue polypeptide: Lectin-D2 (82 aa).

2 Chitin-binding type-1 domains span residues 1-42 (APEC…QCDY) and 43-82 (WRCG…SQCD). Cystine bridges form between C4–C19, C13–C25, C18–C32, and C36–C40. 4 residues coordinate a carbohydrate: S20, W22, Y24, and Y31. W43 contributes to the a carbohydrate binding site. 4 cysteine pairs are disulfide-bonded: C45-C60, C54-C66, C59-C73, and C77-C81. A carbohydrate is bound by residues S61, Y63, W65, and H72.

Monomer.

In terms of biological role, N-acetyl-D-glucosamine binding lectin. Shows no hemagglutinating activity towards rabbit erythrocytes and weak activity towards trypsin-treated erythrocytes. Has mitogenic activity towards human peripheral blood lymphocytes (HPBL). The chain is Lectin-D2 from Phytolacca americana (American pokeweed).